The chain runs to 233 residues: Small ribosomal subunit protein uS2 (233 aa).

This sequence belongs to the universal ribosomal protein uS2 family.

This is Small ribosomal subunit protein uS2 from Clostridium acetobutylicum (strain ATCC 824 / DSM 792 / JCM 1419 / IAM 19013 / LMG 5710 / NBRC 13948 / NRRL B-527 / VKM B-1787 / 2291 / W).